The following is a 362-amino-acid chain: Protein indeterminate-domain 16 (362 aa).

Residues 1–22 (MELTQPIRENGDPQGHQLTDPD) form a disordered region. 2 C2H2-type zinc fingers span residues 39–61 (YVCEICNQGFQRDQNLQMHRRRH) and 82–112 (YVCPEPTCLHHDPCHALGDLVGIKKHFRRKH). Residues 118–142 (WVCERCSKGYAVQSDYKAHLKTCGS) form a CCHC-type 1; atypical zinc finger. Zn(2+) is bound by residues cysteine 120, cysteine 123, histidine 136, cysteine 140, cysteine 147, cysteine 149, histidine 162, and cysteine 166. The CCHC-type 2; atypical zinc-finger motif lies at 145 to 168 (HSCDCGRVFSRVESFIEHQDTCTI). The tract at residues 155 to 167 (RVESFIEHQDTCT) is SHR-binding. The tract at residues 247 to 278 (SAQARHNEKRETSLTKERANEEARKAEETRQE) is disordered. Positions 251 to 278 (RHNEKRETSLTKERANEEARKAEETRQE) are enriched in basic and acidic residues. The stretch at 252-319 (HNEKRETSLT…VREEAIKRIN (68 aa)) forms a coiled coil.

In terms of tissue distribution, highly expressed in leaves, hypocotyls, roots, vasculature of cotyledons, floral organs and in the endodermis and vasculaturenof inflorescence stems.

It localises to the nucleus. In terms of biological role, transcription factor regulating lateral organ morphogenesis and gravitropic responses. Has a redundant role with IDD14 in directing leaf and floral organ morphogenesis. Acts cooperatively with IDD15 to control silique and branche orientation. Involved in the establishment of auxin gradients through the regulation of auxin biosynthesis and transport. This chain is Protein indeterminate-domain 16, found in Arabidopsis thaliana (Mouse-ear cress).